Here is a 41-residue protein sequence, read N- to C-terminus: Photosystem II reaction center protein J (41 aa).

The chain crosses the membrane as a helical span at residues 9-29; sequence IPLWFVGMVGGLAALGLLAIF.

The protein belongs to the PsbJ family. In terms of assembly, PSII is composed of 1 copy each of membrane proteins PsbA, PsbB, PsbC, PsbD, PsbE, PsbF, PsbH, PsbI, PsbJ, PsbK, PsbL, PsbM, PsbT, PsbX, PsbY, PsbZ, Psb30/Ycf12, at least 3 peripheral proteins of the oxygen-evolving complex and a large number of cofactors. It forms dimeric complexes.

It is found in the plastid. The protein resides in the chloroplast thylakoid membrane. Functionally, one of the components of the core complex of photosystem II (PSII). PSII is a light-driven water:plastoquinone oxidoreductase that uses light energy to abstract electrons from H(2)O, generating O(2) and a proton gradient subsequently used for ATP formation. It consists of a core antenna complex that captures photons, and an electron transfer chain that converts photonic excitation into a charge separation. This chain is Photosystem II reaction center protein J, found in Ostreococcus tauri.